Here is a 361-residue protein sequence, read N- to C-terminus: CRISPR system associated protein Cas8 (361 aa).

Monomer. Can form a Cascade complex with Csa5, Cas7, Cas5a, Cas3 and Cas3'.

In terms of biological role, CRISPR (clustered regularly interspaced short palindromic repeat) is an adaptive immune system that provides protection against mobile genetic elements (viruses, transposable elements and conjugative plasmids). CRISPR clusters contain sequences complementary to antecedent mobile elements and target invading nucleic acids. CRISPR clusters are transcribed and processed into CRISPR RNA (crRNA). The protein is CRISPR system associated protein Cas8 (cas8a2) of Thermoproteus tenax (strain ATCC 35583 / DSM 2078 / JCM 9277 / NBRC 100435 / Kra 1).